The chain runs to 653 residues: Asparagine--tRNA ligase, cytoplasmic (653 aa).

This sequence belongs to the class-II aminoacyl-tRNA synthetase family.

It localises to the cytoplasm. The enzyme catalyses tRNA(Asn) + L-asparagine + ATP = L-asparaginyl-tRNA(Asn) + AMP + diphosphate + H(+). The protein is Asparagine--tRNA ligase, cytoplasmic (asnS1) of Dictyostelium discoideum (Social amoeba).